Reading from the N-terminus, the 95-residue chain is MSIDQSTAAKVAKLARIKVEQDALPALAAEFNTILGFIEQLNEVNVDGVEPMVSVTPMRLKRRTDGVSDGNQQAKVLSNAPDAREGFFAVPKVVE.

Belongs to the GatC family. As to quaternary structure, heterotrimer of A, B and C subunits.

It carries out the reaction L-glutamyl-tRNA(Gln) + L-glutamine + ATP + H2O = L-glutaminyl-tRNA(Gln) + L-glutamate + ADP + phosphate + H(+). The catalysed reaction is L-aspartyl-tRNA(Asn) + L-glutamine + ATP + H2O = L-asparaginyl-tRNA(Asn) + L-glutamate + ADP + phosphate + 2 H(+). Functionally, allows the formation of correctly charged Asn-tRNA(Asn) or Gln-tRNA(Gln) through the transamidation of misacylated Asp-tRNA(Asn) or Glu-tRNA(Gln) in organisms which lack either or both of asparaginyl-tRNA or glutaminyl-tRNA synthetases. The reaction takes place in the presence of glutamine and ATP through an activated phospho-Asp-tRNA(Asn) or phospho-Glu-tRNA(Gln). The sequence is that of Aspartyl/glutamyl-tRNA(Asn/Gln) amidotransferase subunit C from Ruegeria pomeroyi (strain ATCC 700808 / DSM 15171 / DSS-3) (Silicibacter pomeroyi).